The primary structure comprises 886 residues: Valine--tRNA ligase (886 aa).

The 'HIGH' region motif lies at 43–53 (PYPTGRMHLGH). A 'KMSKS' region motif is present at residues 528 to 532 (KMSKS). Lys-531 is a binding site for ATP.

This sequence belongs to the class-I aminoacyl-tRNA synthetase family. ValS type 2 subfamily.

It localises to the cytoplasm. The enzyme catalyses tRNA(Val) + L-valine + ATP = L-valyl-tRNA(Val) + AMP + diphosphate. In terms of biological role, catalyzes the attachment of valine to tRNA(Val). As ValRS can inadvertently accommodate and process structurally similar amino acids such as threonine, to avoid such errors, it has a 'posttransfer' editing activity that hydrolyzes mischarged Thr-tRNA(Val) in a tRNA-dependent manner. This chain is Valine--tRNA ligase, found in Methanococcus maripaludis (strain DSM 14266 / JCM 13030 / NBRC 101832 / S2 / LL).